We begin with the raw amino-acid sequence, 216 residues long: DNA gyrase subunit B (216 aa).

Positions 140-216 (SELFLVEGDS…PDKLRYHKIV (77 aa)) constitute a Toprim domain.

It belongs to the type II topoisomerase GyrB family. As to quaternary structure, heterotetramer, composed of two GyrA and two GyrB chains. In the heterotetramer, GyrA contains the active site tyrosine that forms a transient covalent intermediate with DNA, while GyrB binds cofactors and catalyzes ATP hydrolysis.

The protein localises to the cytoplasm. It carries out the reaction ATP-dependent breakage, passage and rejoining of double-stranded DNA.. Its function is as follows. A type II topoisomerase that negatively supercoils closed circular double-stranded (ds) DNA in an ATP-dependent manner to modulate DNA topology and maintain chromosomes in an underwound state. Negative supercoiling favors strand separation, and DNA replication, transcription, recombination and repair, all of which involve strand separation. Also able to catalyze the interconversion of other topological isomers of dsDNA rings, including catenanes and knotted rings. Type II topoisomerases break and join 2 DNA strands simultaneously in an ATP-dependent manner. This is DNA gyrase subunit B (gyrB) from Acinetobacter sp. (strain SEIP 12.81).